The following is a 319-amino-acid chain: Homoserine kinase (319 aa).

An ATP-binding site is contributed by 100–110 (PLSSGMGSSAS).

The protein belongs to the GHMP kinase family. Homoserine kinase subfamily.

It is found in the cytoplasm. It catalyses the reaction L-homoserine + ATP = O-phospho-L-homoserine + ADP + H(+). It participates in amino-acid biosynthesis; L-threonine biosynthesis; L-threonine from L-aspartate: step 4/5. In terms of biological role, catalyzes the ATP-dependent phosphorylation of L-homoserine to L-homoserine phosphate. The polypeptide is Homoserine kinase (Chloroherpeton thalassium (strain ATCC 35110 / GB-78)).